We begin with the raw amino-acid sequence, 174 residues long: Trypsin inhibitor (174 aa).

Disulfide bonds link Cys40-Cys86 and Cys131-Cys140.

The protein belongs to the protease inhibitor I3 (leguminous Kunitz-type inhibitor) family. In terms of assembly, heterodimer of an alpha and a beta chain linked by a disulfide bond.

In terms of biological role, inhibits trypsin and chymotrypsin with a 1:1 stoichiometry, with dissociation constants of 1.56 nM and 120 nM respectively. Inhibits plasma kallikrein, factor XIIa and plasmin with dissociation constants of 5.0 nM, 150 nM and 18 nM respectively. Does not inhibit factor Xa, thrombin, tissue kallikrein or cysteine proteinases such as papain and bromelain. This is Trypsin inhibitor from Enterolobium contortisiliquum (Pacara earpod tree).